The following is a 193-amino-acid chain: MVEHTRKGRLVVLVGPSAVGKSTVVRCVRERLPELVFSVSATTRAPRPGEVDGRDYRFVTRAEFDAMIEAGELLEWAEIHGGLQRSGTPAAPVREALAAGKNVLLEVDLEGARSVRKVMPEARLVFLAPPSWDELVARLTARGTETPEVIARRLETARIELAACDEFDNVIVNDEVTSACEQLVSLFVSTNSR.

Residues 8–188 form the Guanylate kinase-like domain; sequence GRLVVLVGPS…ACEQLVSLFV (181 aa). 15 to 22 contributes to the ATP binding site; that stretch reads GPSAVGKS.

It belongs to the guanylate kinase family.

Its subcellular location is the cytoplasm. The catalysed reaction is GMP + ATP = GDP + ADP. In terms of biological role, essential for recycling GMP and indirectly, cGMP. The protein is Guanylate kinase of Nocardia farcinica (strain IFM 10152).